A 662-amino-acid chain; its full sequence is DNA ligase (662 aa).

NAD(+) is bound by residues Asp-34 to Asp-38, Ser-83 to Ile-84, and Glu-113. The active-site N6-AMP-lysine intermediate is Lys-115. NAD(+)-binding residues include Arg-136, Glu-172, Lys-286, and Lys-310. Zn(2+) contacts are provided by Cys-404, Cys-407, Cys-422, and Cys-427. Residues Arg-583 to Asn-662 enclose the BRCT domain.

It belongs to the NAD-dependent DNA ligase family. LigA subfamily. The cofactor is Mg(2+). Requires Mn(2+) as cofactor.

It carries out the reaction NAD(+) + (deoxyribonucleotide)n-3'-hydroxyl + 5'-phospho-(deoxyribonucleotide)m = (deoxyribonucleotide)n+m + AMP + beta-nicotinamide D-nucleotide.. Its function is as follows. DNA ligase that catalyzes the formation of phosphodiester linkages between 5'-phosphoryl and 3'-hydroxyl groups in double-stranded DNA using NAD as a coenzyme and as the energy source for the reaction. It is essential for DNA replication and repair of damaged DNA. In Chlamydia felis (strain Fe/C-56) (Chlamydophila felis), this protein is DNA ligase.